Here is a 1073-residue protein sequence, read N- to C-terminus: Guanylyl cyclase C (1073 aa).

The first 23 residues, 1-23 (MKTPLLALALWSLLLQLGLTFWP), serve as a signal peptide directing secretion. Residues 24–433 (SSVSQNCHNG…IPGRGPQILM (410 aa)) are Extracellular-facing. N-linked (GlcNAc...) asparagine glycosylation is found at Asn-32, Asn-43, Asn-79, Asn-195, Asn-284, Asn-307, and Asn-402. A helical membrane pass occupies residues 434–454 (IAVFTLTGTIVLLLLIALLVL). Residues 455–1073 (RKYKREYALR…NTTDNESTHF (619 aa)) lie on the Cytoplasmic side of the membrane. The region spanning 489–749 (LKIDDDRRRD…KIENTLAKIF (261 aa)) is the Protein kinase domain. Residues 824–954 (TIYFSDIVGF…DTVNTASRME (131 aa)) form the Guanylate cyclase domain.

It belongs to the adenylyl cyclase class-4/guanylyl cyclase family. In terms of assembly, homotrimer. Interacts via its C-terminal region with NHERF4. Interacts with the lectin chaperone VIP36. In terms of processing, glycosylation at Asn-79 is required for interaction with VIP36 while glycosylation at Asn-402 modulates ligand-mediated GC-C activation.

The protein resides in the cell membrane. The protein localises to the endoplasmic reticulum membrane. It catalyses the reaction GTP = 3',5'-cyclic GMP + diphosphate. Its function is as follows. Guanylyl cyclase that catalyzes synthesis of cyclic GMP (cGMP) from GTP. In Sus scrofa (Pig), this protein is Guanylyl cyclase C (GUCY2C).